A 239-amino-acid chain; its full sequence is Non-structural protein V (239 aa).

2 disordered regions span residues 30–104 (PVET…ADEA) and 126–180 (NKSS…HRRE). Residues 65–74 (TPDRQDRSDK) are compositionally biased toward basic and acidic residues. Polar residues-rich tracts occupy residues 89 to 98 (PATSTDQPPT) and 143 to 153 (ASSTSDSTAGE). Positions 177, 196, 200, 212, 214, 217, 221, and 224 each coordinate Zn(2+).

As to quaternary structure, interacts with host STAT1. Interacts with host TXNL1. Interacts (via C-terminus) with host CacyBP; this interaction inhibits host cell apoptosis.

The protein localises to the host cytoplasm. The protein resides in the host nucleus. Its function is as follows. Protects the virus against cell antiviral state by blocking host interferon signaling. Mechanistically, targets host phosphorylated STAT1 (phospho-STAT1) for degradation, thereby inhibiting the interferon alpha signaling pathway. Plays a role in the inhibition of host apoptosis. Interacts with and down-regulates the expression of host TXNL1. In turn, inhibits TXNL1-induced apoptosis through the BCL2-BAX-caspase 3 pathway. Inhibits host apoptosis also by negatively regulating host CacyBP/SIP. Promotes viral replication by activating the extracellular signal-regulated kinase (ERK) pathway. This chain is Non-structural protein V (P/V), found in Gallus gallus (Chicken).